A 120-amino-acid polypeptide reads, in one-letter code: Large ribosomal subunit protein uL22 (120 aa).

This sequence belongs to the universal ribosomal protein uL22 family. As to quaternary structure, part of the 50S ribosomal subunit.

Its function is as follows. This protein binds specifically to 23S rRNA; its binding is stimulated by other ribosomal proteins, e.g. L4, L17, and L20. It is important during the early stages of 50S assembly. It makes multiple contacts with different domains of the 23S rRNA in the assembled 50S subunit and ribosome. The globular domain of the protein is located near the polypeptide exit tunnel on the outside of the subunit, while an extended beta-hairpin is found that lines the wall of the exit tunnel in the center of the 70S ribosome. This chain is Large ribosomal subunit protein uL22, found in Oenococcus oeni (strain ATCC BAA-331 / PSU-1).